The following is a 215-amino-acid chain: Probable phosphoglycerate mutase GpmB (215 aa).

Substrate-binding positions include 8-15 (RHGETQWN), 21-22 (QG), arginine 58, lysine 60, 82-85 (ELDM), 104-105 (RR), and 151-152 (GI). Histidine 9 functions as the Tele-phosphohistidine intermediate in the catalytic mechanism. Glutamate 82 serves as the catalytic Proton donor/acceptor.

It belongs to the phosphoglycerate mutase family. GpmB subfamily.

It catalyses the reaction (2R)-2-phosphoglycerate = (2R)-3-phosphoglycerate. It functions in the pathway carbohydrate degradation; glycolysis; pyruvate from D-glyceraldehyde 3-phosphate: step 3/5. This chain is Probable phosphoglycerate mutase GpmB, found in Salmonella typhi.